The sequence spans 109 residues: Spermidine export protein MdtI (109 aa).

Helical transmembrane passes span 6–26 (WVHG…NVLL), 36–56 (CYGI…SQAV), 64–84 (AYAL…WVLF), and 88–108 (LNPK…MIKL).

Belongs to the drug/metabolite transporter (DMT) superfamily. Small multidrug resistance (SMR) (TC 2.A.7.1) family. MdtI subfamily. Forms a complex with MdtJ.

It is found in the cell inner membrane. Functionally, catalyzes the excretion of spermidine. The protein is Spermidine export protein MdtI of Salmonella arizonae (strain ATCC BAA-731 / CDC346-86 / RSK2980).